Consider the following 94-residue polypeptide: Integration host factor subunit beta (94 aa).

This sequence belongs to the bacterial histone-like protein family. In terms of assembly, heterodimer of an alpha and a beta chain.

This protein is one of the two subunits of integration host factor, a specific DNA-binding protein that functions in genetic recombination as well as in transcriptional and translational control. The chain is Integration host factor subunit beta from Pectobacterium atrosepticum (strain SCRI 1043 / ATCC BAA-672) (Erwinia carotovora subsp. atroseptica).